Here is a 215-residue protein sequence, read N- to C-terminus: MTQAITVEESRELDDKTINKIGIPSLVLMERAGLKIYENMLDNKDLDLSNVLILAGTGNNGGDGLVVARLLATHGYQVSILTVGNPDHASEDHLAQARICNYYQIPKVFMNADFNKFTTLVDALFGSGLSRNVGGDFATIIDKANASTAKIHAIDIPSGLNGDTGDVMGTAIKAISTSTVAYPKVGMLKDQAKPYTGKIYVDDIGIYRGNAFENE.

Residues 10–212 (SRELDDKTIN…DIGIYRGNAF (203 aa)) form the YjeF N-terminal domain. 59-63 (NNGGD) is a (6S)-NADPHX binding site. Residues N60 and D122 each coordinate K(+). Residues 126–132 (GSGLSRN) and D155 contribute to the (6S)-NADPHX site. Residue S158 coordinates K(+).

The protein belongs to the NnrE/AIBP family. K(+) serves as cofactor.

It catalyses the reaction (6R)-NADHX = (6S)-NADHX. The enzyme catalyses (6R)-NADPHX = (6S)-NADPHX. Catalyzes the epimerization of the S- and R-forms of NAD(P)HX, a damaged form of NAD(P)H that is a result of enzymatic or heat-dependent hydration. This is a prerequisite for the S-specific NAD(P)H-hydrate dehydratase to allow the repair of both epimers of NAD(P)HX. The sequence is that of NAD(P)H-hydrate epimerase from Lentilactobacillus buchneri (strain NRRL B-30929) (Lactobacillus buchneri).